The chain runs to 129 residues: Glycine cleavage system H protein (129 aa).

Residues 24–106 enclose the Lipoyl-binding domain; the sequence is TYTVGITEHA…YVGGWIFKIK (83 aa). Position 65 is an N6-lipoyllysine (lysine 65).

This sequence belongs to the GcvH family. The glycine cleavage system is composed of four proteins: P, T, L and H. The cofactor is (R)-lipoate.

Functionally, the glycine cleavage system catalyzes the degradation of glycine. The H protein shuttles the methylamine group of glycine from the P protein to the T protein. This is Glycine cleavage system H protein from Salmonella paratyphi B (strain ATCC BAA-1250 / SPB7).